The sequence spans 528 residues: Xylose import ATP-binding protein XylG (528 aa).

ABC transporter domains follow at residues 6–245 (LQMN…VGRE) and 262–507 (FEAR…LSHP). ATP is bound at residue 38-45 (GENGAGKS). Positions 504-528 (LSHPGDPDSNDPANNNHNDNDRKTT) are disordered.

The protein belongs to the ABC transporter superfamily. Xylose importer (TC 3.A.1.2.4) family. In terms of assembly, the complex is composed of two ATP-binding proteins (XylG), two transmembrane proteins (XylH) and a solute-binding protein (XylF).

It is found in the cell inner membrane. It catalyses the reaction D-xylose(out) + ATP + H2O = D-xylose(in) + ADP + phosphate + H(+). Its function is as follows. Part of the ABC transporter complex XylFGH involved in xylose import. Responsible for energy coupling to the transport system. This is Xylose import ATP-binding protein XylG from Pseudomonas syringae pv. tomato (strain ATCC BAA-871 / DC3000).